Consider the following 338-residue polypeptide: Ribosomal RNA small subunit methyltransferase C (338 aa).

It belongs to the methyltransferase superfamily. RsmC family. Monomer.

Its subcellular location is the cytoplasm. It catalyses the reaction guanosine(1207) in 16S rRNA + S-adenosyl-L-methionine = N(2)-methylguanosine(1207) in 16S rRNA + S-adenosyl-L-homocysteine + H(+). Functionally, specifically methylates the guanine in position 1207 of 16S rRNA in the 30S particle. The polypeptide is Ribosomal RNA small subunit methyltransferase C (Acinetobacter baylyi (strain ATCC 33305 / BD413 / ADP1)).